Here is a 407-residue protein sequence, read N- to C-terminus: Phosphopentomutase (407 aa).

Mn(2+) contacts are provided by aspartate 11, aspartate 305, histidine 310, aspartate 346, histidine 347, and histidine 358.

Belongs to the phosphopentomutase family. The cofactor is Mn(2+).

The protein localises to the cytoplasm. The enzyme catalyses 2-deoxy-alpha-D-ribose 1-phosphate = 2-deoxy-D-ribose 5-phosphate. It catalyses the reaction alpha-D-ribose 1-phosphate = D-ribose 5-phosphate. It participates in carbohydrate degradation; 2-deoxy-D-ribose 1-phosphate degradation; D-glyceraldehyde 3-phosphate and acetaldehyde from 2-deoxy-alpha-D-ribose 1-phosphate: step 1/2. In terms of biological role, isomerase that catalyzes the conversion of deoxy-ribose 1-phosphate (dRib-1-P) and ribose 1-phosphate (Rib-1-P) to deoxy-ribose 5-phosphate (dRib-5-P) and ribose 5-phosphate (Rib-5-P), respectively. The chain is Phosphopentomutase from Legionella pneumophila (strain Corby).